The chain runs to 67 residues: Large ribosomal subunit protein uL30 (67 aa).

The protein belongs to the universal ribosomal protein uL30 family. As to quaternary structure, part of the 50S ribosomal subunit.

This Thermotoga petrophila (strain ATCC BAA-488 / DSM 13995 / JCM 10881 / RKU-1) protein is Large ribosomal subunit protein uL30.